The primary structure comprises 405 residues: L-carnitine CoA-transferase (405 aa).

CoA contacts are provided by K97 and R104. The Nucleophile role is filled by D169.

It belongs to the CoA-transferase III family. CaiB subfamily. Homodimer.

It localises to the cytoplasm. It catalyses the reaction crotonobetainyl-CoA + (R)-carnitine = crotonobetaine + (R)-carnitinyl-CoA. It carries out the reaction 4-(trimethylamino)butanoyl-CoA + (R)-carnitine = (R)-carnitinyl-CoA + 4-(trimethylamino)butanoate. The protein operates within amine and polyamine metabolism; carnitine metabolism. In terms of biological role, catalyzes the reversible transfer of the CoA moiety from gamma-butyrobetainyl-CoA to L-carnitine to generate L-carnitinyl-CoA and gamma-butyrobetaine. Is also able to catalyze the reversible transfer of the CoA moiety from gamma-butyrobetainyl-CoA or L-carnitinyl-CoA to crotonobetaine to generate crotonobetainyl-CoA. This is L-carnitine CoA-transferase from Escherichia coli O6:K15:H31 (strain 536 / UPEC).